The sequence spans 90 residues: Large ribosomal subunit protein eL31 (90 aa).

The protein belongs to the eukaryotic ribosomal protein eL31 family.

The chain is Large ribosomal subunit protein eL31 from Thermococcus gammatolerans (strain DSM 15229 / JCM 11827 / EJ3).